The chain runs to 340 residues: 4-hydroxythreonine-4-phosphate dehydrogenase (340 aa).

T135 is a substrate binding site. Positions 170, 215, and 276 each coordinate a divalent metal cation. Positions 284, 293, and 302 each coordinate substrate.

It belongs to the PdxA family. In terms of assembly, homodimer. A divalent metal cation serves as cofactor.

It is found in the cytoplasm. The enzyme catalyses 4-(phosphooxy)-L-threonine + NAD(+) = 3-amino-2-oxopropyl phosphate + CO2 + NADH. It functions in the pathway cofactor biosynthesis; pyridoxine 5'-phosphate biosynthesis; pyridoxine 5'-phosphate from D-erythrose 4-phosphate: step 4/5. Functionally, catalyzes the NAD(P)-dependent oxidation of 4-(phosphooxy)-L-threonine (HTP) into 2-amino-3-oxo-4-(phosphooxy)butyric acid which spontaneously decarboxylates to form 3-amino-2-oxopropyl phosphate (AHAP). The protein is 4-hydroxythreonine-4-phosphate dehydrogenase of Synechococcus sp. (strain JA-2-3B'a(2-13)) (Cyanobacteria bacterium Yellowstone B-Prime).